The sequence spans 98 residues: UPF0235 protein Pmen_4153 (98 aa).

Belongs to the UPF0235 family.

The chain is UPF0235 protein Pmen_4153 from Ectopseudomonas mendocina (strain ymp) (Pseudomonas mendocina).